We begin with the raw amino-acid sequence, 556 residues long: MKSDVEIAQSATMQHINHIAEKLGLTVDQIEQYGKYKAKINPADAFKLPAKNGKLILVTAINPTPAGEGKTTVTIGLTDALNHIGKQAVVAAREPSLGPVFGVKGGAAGGGYAQVLPMEDINLHFTGDFHAITSANNLLAALLDNHIYQGNALNIDPKRILWRRVIDMNDRQLRNILGGLGNTTDGVIRPDGFDITVASEVMAIFCLAKDLADLKTRLGNILVAYTKDKQPVYAKDLNAQGAMAALLKDAIKPNLVQTMAGSPAFIHGGPFANIAHGCNSVIATRLALHLGDYAVTEAGFGADLGAEKFCDIKCRLAELKPDVAVIVATVRALKYNGGVEKANLAEENLEALTEGLPNLLKHIANLKNVLGLPVVVALNRFVSDSDAELALIQTACAKQGVEVSLTEVWARSAVGGVDLAHKVLKAIDEQQNNFQFAYDVNDRIQHKITAIAQKIYGATDVNFSAEALAEIKNLEKLALDKLPICMAKTQYSLSDSAKLLGCPTGFNITVRSITVSAGAGFIVAICGSIMRMPGLPKNPATNRIDVDENGVISGLF.

64 to 71 (TPAGEGKT) contributes to the ATP binding site.

The protein belongs to the formate--tetrahydrofolate ligase family.

The catalysed reaction is (6S)-5,6,7,8-tetrahydrofolate + formate + ATP = (6R)-10-formyltetrahydrofolate + ADP + phosphate. Its pathway is one-carbon metabolism; tetrahydrofolate interconversion. This is Formate--tetrahydrofolate ligase from Haemophilus ducreyi (strain 35000HP / ATCC 700724).